The following is an 829-amino-acid chain: Periplasmic nitrate reductase (829 aa).

Residues 1–30 (MNSPRPTPPPFAAAAAGLPILVRASNLVTE) form the signal peptide. The region spanning 36-92 (LVWNKAPCRFCGTGCSVMVATRDGQVVATHGDIKAEVNRGINCVKGYFLSKIMYGSD) is the 4Fe-4S Mo/W bis-MGD-type domain. Positions 43, 46, 50, and 78 each coordinate [4Fe-4S] cluster. Residues lysine 80, glutamine 147, asparagine 172, cysteine 176, 209–216 (WGSNMAEM), 240–244 (STFEH), 259–261 (QTD), methionine 370, glutamine 374, asparagine 480, 506–507 (SD), lysine 529, aspartate 556, and 716–725 (TGRVLEHWHT) each bind Mo-bis(molybdopterin guanine dinucleotide). Substrate is bound at residue phenylalanine 792. Asparagine 800 and lysine 817 together coordinate Mo-bis(molybdopterin guanine dinucleotide).

It belongs to the prokaryotic molybdopterin-containing oxidoreductase family. NasA/NapA/NarB subfamily. As to quaternary structure, component of the periplasmic nitrate reductase NapAB complex composed of NapA and NapB. It depends on [4Fe-4S] cluster as a cofactor. Mo-bis(molybdopterin guanine dinucleotide) is required as a cofactor.

It is found in the periplasm. The enzyme catalyses 2 Fe(II)-[cytochrome] + nitrate + 2 H(+) = 2 Fe(III)-[cytochrome] + nitrite + H2O. Catalytic subunit of the periplasmic nitrate reductase complex NapAB. Receives electrons from NapB and catalyzes the reduction of nitrate to nitrite. In Pseudomonas aeruginosa (strain ATCC 15692 / DSM 22644 / CIP 104116 / JCM 14847 / LMG 12228 / 1C / PRS 101 / PAO1), this protein is Periplasmic nitrate reductase.